The sequence spans 279 residues: Diaminopimelate epimerase (279 aa).

Substrate-binding residues include Asn-11 and Asn-63. The Proton donor role is filled by Cys-72. Substrate is bound by residues 73–74 (GN), Asn-161, Asn-194, and 212–213 (ER). The active-site Proton acceptor is Cys-221. Position 222-223 (222-223 (GT)) interacts with substrate.

This sequence belongs to the diaminopimelate epimerase family. In terms of assembly, homodimer.

The protein resides in the cytoplasm. The enzyme catalyses (2S,6S)-2,6-diaminopimelate = meso-2,6-diaminopimelate. It functions in the pathway amino-acid biosynthesis; L-lysine biosynthesis via DAP pathway; DL-2,6-diaminopimelate from LL-2,6-diaminopimelate: step 1/1. In terms of biological role, catalyzes the stereoinversion of LL-2,6-diaminopimelate (L,L-DAP) to meso-diaminopimelate (meso-DAP), a precursor of L-lysine and an essential component of the bacterial peptidoglycan. This chain is Diaminopimelate epimerase, found in Moorella thermoacetica (strain ATCC 39073 / JCM 9320).